Reading from the N-terminus, the 331-residue chain is 6-phosphogluconolactonase (331 aa).

Lys287 is modified (N6-acetyllysine).

Belongs to the cycloisomerase 2 family.

The catalysed reaction is 6-phospho-D-glucono-1,5-lactone + H2O = 6-phospho-D-gluconate + H(+). It functions in the pathway carbohydrate degradation; pentose phosphate pathway; D-ribulose 5-phosphate from D-glucose 6-phosphate (oxidative stage): step 2/3. In terms of biological role, catalyzes the hydrolysis of 6-phosphogluconolactone to 6-phosphogluconate. The sequence is that of 6-phosphogluconolactonase from Escherichia coli (strain SMS-3-5 / SECEC).